Here is a 1372-residue protein sequence, read N- to C-terminus: DNA-directed RNA polymerase subunit beta (1372 aa).

It belongs to the RNA polymerase beta chain family. In terms of assembly, the RNAP catalytic core consists of 2 alpha, 1 beta, 1 beta' and 1 omega subunit. When a sigma factor is associated with the core the holoenzyme is formed, which can initiate transcription.

It carries out the reaction RNA(n) + a ribonucleoside 5'-triphosphate = RNA(n+1) + diphosphate. Functionally, DNA-dependent RNA polymerase catalyzes the transcription of DNA into RNA using the four ribonucleoside triphosphates as substrates. The sequence is that of DNA-directed RNA polymerase subunit beta from Psychrobacter arcticus (strain DSM 17307 / VKM B-2377 / 273-4).